A 301-amino-acid polypeptide reads, in one-letter code: GTPase Era (301 aa).

Residues 4 to 173 (KAGFVALIGK…LECISQHLSP (170 aa)) form the Era-type G domain. The interval 12–19 (GKPNAGKS) is G1. Residue 12–19 (GKPNAGKS) participates in GTP binding. A G2 region spans residues 38 to 42 (NATRK). The segment at 64–67 (DTPG) is G3. GTP is bound by residues 64–68 (DTPGL) and 122–125 (SKID). The segment at 122–125 (SKID) is G4. A G5 region spans residues 152 to 154 (LSA). In terms of domain architecture, KH type-2 spans 204–280 (LSDEIPYESD…FLNLQVIAQK (77 aa)).

The protein belongs to the TRAFAC class TrmE-Era-EngA-EngB-Septin-like GTPase superfamily. Era GTPase family. In terms of assembly, monomer.

It localises to the cytoplasm. It is found in the cell inner membrane. Functionally, an essential GTPase that binds both GDP and GTP, with rapid nucleotide exchange. Plays a role in 16S rRNA processing and 30S ribosomal subunit biogenesis and possibly also in cell cycle regulation and energy metabolism. This Helicobacter pylori (strain ATCC 700392 / 26695) (Campylobacter pylori) protein is GTPase Era.